A 92-amino-acid polypeptide reads, in one-letter code: Small ribosomal subunit protein uS19 (92 aa).

It belongs to the universal ribosomal protein uS19 family.

In terms of biological role, protein S19 forms a complex with S13 that binds strongly to the 16S ribosomal RNA. The polypeptide is Small ribosomal subunit protein uS19 (Paracidovorax citrulli (strain AAC00-1) (Acidovorax citrulli)).